We begin with the raw amino-acid sequence, 46 residues long: KECMVDGTVCYIHNHNDCCGSCLCLNGPIARPWKMMVGNCKCGPKA.

Intrachain disulfides connect Cys3–Cys19, Cys10–Cys22, Cys18–Cys42, and Cys24–Cys40. The keys region for toxin activity stretch occupies residues 31 to 33 (RPW).

The protein belongs to the neurotoxin 16 (SFI) family. Expressed by the venom gland.

It is found in the secreted. Functionally, insecticidal toxin. It inhibits insect voltage-gated sodium channels (Nav) by partially blocking the channel pore in DUM neurons from the American cockroach, not by acting as a gating modifier. The inhibition is only partially reversible after prolonged washout. In vivo, the toxin causes flaccid paralysis followed by death when injected into Heliothis virescens larvae. It also causes uncoordinated movements followed by full paralysis to sheep blowflies (Lucilia cuprina). When the toxin is fused to snowdrop lectin, it is orally active against larvae of the tomato moth (Laconobia oleracea), the rice brown planthopper (Nilaparvata lugens), and the peach-potato aphid (Myzus persicae). The polypeptide is Mu-segestritoxin-Sf1d (Segestria florentina (Tube-web spider)).